A 136-amino-acid polypeptide reads, in one-letter code: Nodulation protein K (136 aa).

The sequence is that of Nodulation protein K (nodK) from Bradyrhizobium sp. (strain ANU 289).